The chain runs to 197 residues: MYQIVLASGSPRRKEILSQVGINFTVCVSNMEEITSETLPENIVMELSKMKAHDIAKQYETNTIIIGSDTIVAYKNQILGKPKNEDHAKEMLQLLSGVTHEVYTGVTVIIKNDSGEVEERTFFEISKVTVSDLTEEEIMDYIKSKEPMDKAGAYAVQGRFAAHVTRIEGDYYTIVGLPIARLYQEVKKFGIDLVKQM.

Residue D69 is the Proton acceptor of the active site.

The protein belongs to the Maf family. YhdE subfamily. It depends on a divalent metal cation as a cofactor.

It localises to the cytoplasm. It carries out the reaction dTTP + H2O = dTMP + diphosphate + H(+). The enzyme catalyses UTP + H2O = UMP + diphosphate + H(+). Functionally, nucleoside triphosphate pyrophosphatase that hydrolyzes dTTP and UTP. May have a dual role in cell division arrest and in preventing the incorporation of modified nucleotides into cellular nucleic acids. The polypeptide is dTTP/UTP pyrophosphatase (Lachnoclostridium phytofermentans (strain ATCC 700394 / DSM 18823 / ISDg) (Clostridium phytofermentans)).